Reading from the N-terminus, the 84-residue chain is Large ribosomal subunit protein bL27 (84 aa).

This sequence belongs to the bacterial ribosomal protein bL27 family.

This chain is Large ribosomal subunit protein bL27, found in Kocuria rhizophila (strain ATCC 9341 / DSM 348 / NBRC 103217 / DC2201).